The sequence spans 317 residues: SWI/SNF-related matrix-associated actin-dependent regulator of chromatin subfamily E member 1-related (317 aa).

Residues 1 to 22 (MSHGPKQPGAASAPASGKAPGQ) show a composition bias toward low complexity. The interval 1-71 (MSHGPKQPGA…RKKILPNGPK (71 aa)) is disordered. A Glycyl lysine isopeptide (Lys-Gly) (interchain with G-Cter in SUMO2) cross-link involves residue K31. Over residues 31–52 (KQERGEGPRAGEKGSHEEEPVK) the composition is skewed to basic and acidic residues. Residues 53 to 65 (KRGWPKGKKRKKI) are compositionally biased toward basic residues. A DNA-binding region (HMG box) is located at residues 70–138 (PKAPVTGYVR…QYMKELRAYQ (69 aa)). Position 160 is a phosphoserine (S160). Residues 190–257 (EEFLDQNKAR…LQQQLQAVRQ (68 aa)) are a coiled coil.

In terms of assembly, component of a BHC histone deacetylase complex that contains HDAC1, HDAC2, HMG20B/BRAF35, KDM1A, RCOR1/CoREST and PHF21A/BHC80. The BHC complex may also contain ZMYM2, ZNF217, ZMYM3, GSE1 and GTF2I. Interacts with the BRCA2 tumor suppressor protein.

It is found in the nucleus. The protein localises to the chromosome. Its function is as follows. Required for correct progression through G2 phase of the cell cycle and entry into mitosis. Required for RCOR1/CoREST mediated repression of neuronal specific gene promoters. This Bos taurus (Bovine) protein is SWI/SNF-related matrix-associated actin-dependent regulator of chromatin subfamily E member 1-related (HMG20B).